The following is a 170-amino-acid chain: Myosin regulatory light chain 2, skeletal muscle isoform (170 aa).

Position 2 is a n,N,N-trimethylalanine (Ala2). Residues Ser16 and Ser17 each carry the phosphoserine modification. Thr26 and Thr36 each carry phosphothreonine. The EF-hand 1 domain maps to 26-61 (TQIQEFKEAFTVIDQNRDGIIDKEDLRDTFAAMGRL). Ca(2+) contacts are provided by Asp39, Asn41, Asp43, and Asp50. Residue Ser76 is modified to Phosphoserine. EF-hand domains follow at residues 96 to 131 (DPED…QCDR) and 132 to 167 (FSQE…GDAK). Residue Thr102 is modified to Phosphothreonine.

Myosin is a hexamer of 2 heavy chains and 4 light chains.

Functionally, plays a role in muscle contraction. This Bos taurus (Bovine) protein is Myosin regulatory light chain 2, skeletal muscle isoform.